The chain runs to 470 residues: Uronate isomerase (470 aa).

It belongs to the metallo-dependent hydrolases superfamily. Uronate isomerase family.

It carries out the reaction D-glucuronate = D-fructuronate. It catalyses the reaction aldehydo-D-galacturonate = keto-D-tagaturonate. Its pathway is carbohydrate metabolism; pentose and glucuronate interconversion. This is Uronate isomerase from Vibrio parahaemolyticus serotype O3:K6 (strain RIMD 2210633).